Reading from the N-terminus, the 148-residue chain is Large ribosomal subunit protein bL9 (148 aa).

This sequence belongs to the bacterial ribosomal protein bL9 family.

Binds to the 23S rRNA. The protein is Large ribosomal subunit protein bL9 of Alkaliphilus oremlandii (strain OhILAs) (Clostridium oremlandii (strain OhILAs)).